The following is a 55-amino-acid chain: ATP synthase F(0) complex subunit 8 (55 aa).

Residues 10–32 (FFIMLASWLTFSLIIQPKLLTFV) form a helical membrane-spanning segment.

Belongs to the ATPase protein 8 family. In terms of assembly, component of the ATP synthase complex composed at least of ATP5F1A/subunit alpha, ATP5F1B/subunit beta, ATP5MC1/subunit c (homooctomer), MT-ATP6/subunit a, MT-ATP8/subunit 8, ATP5ME/subunit e, ATP5MF/subunit f, ATP5MG/subunit g, ATP5MK/subunit k, ATP5MJ/subunit j, ATP5F1C/subunit gamma, ATP5F1D/subunit delta, ATP5F1E/subunit epsilon, ATP5PF/subunit F6, ATP5PB/subunit b, ATP5PD/subunit d, ATP5PO/subunit OSCP. ATP synthase complex consists of a soluble F(1) head domain (subunits alpha(3) and beta(3)) - the catalytic core - and a membrane F(0) domain - the membrane proton channel (subunits c, a, 8, e, f, g, k and j). These two domains are linked by a central stalk (subunits gamma, delta, and epsilon) rotating inside the F1 region and a stationary peripheral stalk (subunits F6, b, d, and OSCP).

The protein resides in the mitochondrion membrane. Functionally, subunit 8, of the mitochondrial membrane ATP synthase complex (F(1)F(0) ATP synthase or Complex V) that produces ATP from ADP in the presence of a proton gradient across the membrane which is generated by electron transport complexes of the respiratory chain. ATP synthase complex consist of a soluble F(1) head domain - the catalytic core - and a membrane F(1) domain - the membrane proton channel. These two domains are linked by a central stalk rotating inside the F(1) region and a stationary peripheral stalk. During catalysis, ATP synthesis in the catalytic domain of F(1) is coupled via a rotary mechanism of the central stalk subunits to proton translocation. In vivo, can only synthesize ATP although its ATP hydrolase activity can be activated artificially in vitro. Part of the complex F(0) domain. The protein is ATP synthase F(0) complex subunit 8 of Loxigilla noctis (Lesser Antillean bullfinch).